A 192-amino-acid polypeptide reads, in one-letter code: Immunoglobulin superfamily member 23 (192 aa).

Positions 1 to 26 (MRAKPQSPLPRNPVPAWSPPTTTTDP) are disordered. Residues 7-18 (SPLPRNPVPAWS) show a composition bias toward pro residues. One can recognise an Ig-like domain in the interval 20–128 (PTTTTDPMLE…QLVSEPVTIS (109 aa)). Residue asparagine 64 is glycosylated (N-linked (GlcNAc...) asparagine). A helical membrane pass occupies residues 158–178 (LLAAGILGAGALIAGMCFIII).

Expressed in bone and small intestine. Highly expressed in osteoclasts, and low expressed in osteoblasts and peripheral blood mononuclear cells (PBMCs).

Its subcellular location is the cell membrane. Functionally, may be involved in osteoclast differentiation. The polypeptide is Immunoglobulin superfamily member 23 (Homo sapiens (Human)).